We begin with the raw amino-acid sequence, 332 residues long: Holliday junction branch migration complex subunit RuvB (332 aa).

The large ATPase domain (RuvB-L) stretch occupies residues 1-181 (MSRILDNEIM…FGITGHMEYY (181 aa)). ATP is bound by residues Leu-20, Arg-21, Gly-62, Lys-65, Thr-66, Thr-67, 128-130 (EDF), Arg-171, Tyr-181, and Arg-218. Thr-66 is a binding site for Mg(2+). The small ATPAse domain (RuvB-S) stretch occupies residues 182–252 (AHADLTEIVE…ITDKALTMLD (71 aa)). The head domain (RuvB-H) stretch occupies residues 255 to 332 (HEGLDYVDQK…EHLGYEYSEK (78 aa)). DNA contacts are provided by Arg-291, Arg-310, Arg-312, and Arg-315.

Belongs to the RuvB family. In terms of assembly, homohexamer. Forms an RuvA(8)-RuvB(12)-Holliday junction (HJ) complex. HJ DNA is sandwiched between 2 RuvA tetramers; dsDNA enters through RuvA and exits via RuvB. An RuvB hexamer assembles on each DNA strand where it exits the tetramer. Each RuvB hexamer is contacted by two RuvA subunits (via domain III) on 2 adjacent RuvB subunits; this complex drives branch migration. In the full resolvosome a probable DNA-RuvA(4)-RuvB(12)-RuvC(2) complex forms which resolves the HJ.

Its subcellular location is the cytoplasm. It catalyses the reaction ATP + H2O = ADP + phosphate + H(+). Its function is as follows. The RuvA-RuvB-RuvC complex processes Holliday junction (HJ) DNA during genetic recombination and DNA repair, while the RuvA-RuvB complex plays an important role in the rescue of blocked DNA replication forks via replication fork reversal (RFR). RuvA specifically binds to HJ cruciform DNA, conferring on it an open structure. The RuvB hexamer acts as an ATP-dependent pump, pulling dsDNA into and through the RuvAB complex. RuvB forms 2 homohexamers on either side of HJ DNA bound by 1 or 2 RuvA tetramers; 4 subunits per hexamer contact DNA at a time. Coordinated motions by a converter formed by DNA-disengaged RuvB subunits stimulates ATP hydrolysis and nucleotide exchange. Immobilization of the converter enables RuvB to convert the ATP-contained energy into a lever motion, pulling 2 nucleotides of DNA out of the RuvA tetramer per ATP hydrolyzed, thus driving DNA branch migration. The RuvB motors rotate together with the DNA substrate, which together with the progressing nucleotide cycle form the mechanistic basis for DNA recombination by continuous HJ branch migration. Branch migration allows RuvC to scan DNA until it finds its consensus sequence, where it cleaves and resolves cruciform DNA. This chain is Holliday junction branch migration complex subunit RuvB, found in Streptococcus pneumoniae serotype 2 (strain D39 / NCTC 7466).